Reading from the N-terminus, the 699-residue chain is MAREYKIEDYRNFGIMAHIDAGKTTTTERILYYTGKSHKIGEVHDGAATMDWMEQEQERGITITSAATTTFWKGRDGKTRRFNIIDTPGHVDFTIEVERSLRVLDGAIALLDANAGVEPQTETVWRQAEKYHVPRMIFCNKMDKTGADFYRSVEMIKMRLGATAVVMQLPIGAESDFKGVIDLIEMNALVWRDESLGAQWDVVEIPADMKEKAEEYREKLIETVVEIDEAAMEAYLEGTYPDNDKIRELVRRGTIDVKFHPMFCGTAFKNKGVQPLLDAVVDYLPSPIDIPAIKGIDVKTEGEITRKADDNEPLSMLAFKIMNDPFVGSLTFARIYSGKLEKGTSVMNTVKEKRERVGRMLQMHSNSREDIEEAFAGDIVALAGLKETTTGDTLCDPLKPVILERMEFPEPVIQIAIEPKTKGDQEKMGLALNRLAAEDPSFRVKTDEESGQTIIAGMGELHLDIIVDRMRREFKVEASVGAPQVAYRETITRKHEEDYTHKKQSGGTGQFARVKIVFEPNPEGEDFAFESKIVGGAVPKEYIPGVQKGIESVLSSGPLAGFPMLGVKATLIDGAFHDVDSSVLAFEIASRACFREAAKKAGAQLLEPIMKVEVVTPEDYVGDVIGDLNSRRGQIQGQEARGVAVVINAHVPLANMFKYVDNLRSMSQGRAQYTMLFDHYAPVPSNVAQEIQAKYSGQK.

One can recognise a tr-type G domain in the interval 8 to 288 (EDYRNFGIMA…AVVDYLPSPI (281 aa)). GTP-binding positions include 17-24 (AHIDAGKT), 86-90 (DTPGH), and 140-143 (NKMD).

Belongs to the TRAFAC class translation factor GTPase superfamily. Classic translation factor GTPase family. EF-G/EF-2 subfamily.

The protein localises to the cytoplasm. Catalyzes the GTP-dependent ribosomal translocation step during translation elongation. During this step, the ribosome changes from the pre-translocational (PRE) to the post-translocational (POST) state as the newly formed A-site-bound peptidyl-tRNA and P-site-bound deacylated tRNA move to the P and E sites, respectively. Catalyzes the coordinated movement of the two tRNA molecules, the mRNA and conformational changes in the ribosome. The polypeptide is Elongation factor G (Rhizobium meliloti (strain 1021) (Ensifer meliloti)).